The chain runs to 180 residues: Large ribosomal subunit protein uL6 (180 aa).

It belongs to the universal ribosomal protein uL6 family. In terms of assembly, part of the 50S ribosomal subunit.

This protein binds to the 23S rRNA, and is important in its secondary structure. It is located near the subunit interface in the base of the L7/L12 stalk, and near the tRNA binding site of the peptidyltransferase center. In Borreliella afzelii (strain PKo) (Borrelia afzelii), this protein is Large ribosomal subunit protein uL6.